Here is a 337-residue protein sequence, read N- to C-terminus: Glyceraldehyde-3-phosphate dehydrogenase (337 aa).

Residues 12 to 13, Asp-34, and Arg-79 each bind NAD(+); that span reads RI. Residues 150–152, Thr-181, 210–211, and Arg-233 each bind D-glyceraldehyde 3-phosphate; these read SCT and TG. Cys-151 acts as the Nucleophile in catalysis. Residue Asn-315 participates in NAD(+) binding.

This sequence belongs to the glyceraldehyde-3-phosphate dehydrogenase family. As to quaternary structure, homotetramer.

The protein resides in the cytoplasm. It catalyses the reaction D-glyceraldehyde 3-phosphate + phosphate + NAD(+) = (2R)-3-phospho-glyceroyl phosphate + NADH + H(+). The protein operates within carbohydrate degradation; glycolysis; pyruvate from D-glyceraldehyde 3-phosphate: step 1/5. This chain is Glyceraldehyde-3-phosphate dehydrogenase (GPD), found in Podospora anserina (Pleurage anserina).